The sequence spans 364 residues: Chorismate synthase (364 aa).

Arginine 47 is an NADP(+) binding site. FMN-binding positions include 124 to 126 (RAS), glycine 287, 302 to 306 (KPTAT), and arginine 328.

The protein belongs to the chorismate synthase family. Homotetramer. FMNH2 serves as cofactor.

The enzyme catalyses 5-O-(1-carboxyvinyl)-3-phosphoshikimate = chorismate + phosphate. It participates in metabolic intermediate biosynthesis; chorismate biosynthesis; chorismate from D-erythrose 4-phosphate and phosphoenolpyruvate: step 7/7. Its function is as follows. Catalyzes the anti-1,4-elimination of the C-3 phosphate and the C-6 proR hydrogen from 5-enolpyruvylshikimate-3-phosphate (EPSP) to yield chorismate, which is the branch point compound that serves as the starting substrate for the three terminal pathways of aromatic amino acid biosynthesis. This reaction introduces a second double bond into the aromatic ring system. The sequence is that of Chorismate synthase from Prochlorococcus marinus subsp. pastoris (strain CCMP1986 / NIES-2087 / MED4).